The sequence spans 206 residues: Ribosomal RNA large subunit methyltransferase E (206 aa).

5 residues coordinate S-adenosyl-L-methionine: G63, W65, D83, D99, and D124. K164 functions as the Proton acceptor in the catalytic mechanism.

It belongs to the class I-like SAM-binding methyltransferase superfamily. RNA methyltransferase RlmE family.

It is found in the cytoplasm. It catalyses the reaction uridine(2552) in 23S rRNA + S-adenosyl-L-methionine = 2'-O-methyluridine(2552) in 23S rRNA + S-adenosyl-L-homocysteine + H(+). Functionally, specifically methylates the uridine in position 2552 of 23S rRNA at the 2'-O position of the ribose in the fully assembled 50S ribosomal subunit. This is Ribosomal RNA large subunit methyltransferase E from Buchnera aphidicola subsp. Schizaphis graminum (strain Sg).